We begin with the raw amino-acid sequence, 190 residues long: Recombination protein RecR (190 aa).

The segment at 58–73 (CTQCGGLSEDELCYIC) adopts a C4-type zinc-finger fold. One can recognise a Toprim domain in the interval 81 to 167 (SSLCLVESAR…HFTKIAQGVP (87 aa)).

Belongs to the RecR family.

May play a role in DNA repair. It seems to be involved in an RecBC-independent recombinational process of DNA repair. It may act with RecF and RecO. This is Recombination protein RecR from Nitratiruptor sp. (strain SB155-2).